A 126-amino-acid polypeptide reads, in one-letter code: Small ribosomal subunit protein uS13 (126 aa).

Positions 91–126 (RHRRGLPVRGQRTSTNARTRKGPRRAIAGKKKPGKK) are disordered. The segment covering 108-126 (RTRKGPRRAIAGKKKPGKK) has biased composition (basic residues).

Belongs to the universal ribosomal protein uS13 family. As to quaternary structure, part of the 30S ribosomal subunit. Forms a loose heterodimer with protein S19. Forms two bridges to the 50S subunit in the 70S ribosome.

In terms of biological role, located at the top of the head of the 30S subunit, it contacts several helices of the 16S rRNA. In the 70S ribosome it contacts the 23S rRNA (bridge B1a) and protein L5 of the 50S subunit (bridge B1b), connecting the 2 subunits; these bridges are implicated in subunit movement. Contacts the tRNAs in the A and P-sites. The polypeptide is Small ribosomal subunit protein uS13 (Streptomyces coelicolor (strain ATCC BAA-471 / A3(2) / M145)).